The primary structure comprises 184 residues: Ribose 1,5-bisphosphate phosphokinase PhnN (184 aa).

11–18 (GPSGAGKD) is an ATP binding site.

It belongs to the ribose 1,5-bisphosphokinase family.

It catalyses the reaction alpha-D-ribose 1,5-bisphosphate + ATP = 5-phospho-alpha-D-ribose 1-diphosphate + ADP. It functions in the pathway metabolic intermediate biosynthesis; 5-phospho-alpha-D-ribose 1-diphosphate biosynthesis; 5-phospho-alpha-D-ribose 1-diphosphate from D-ribose 5-phosphate (route II): step 3/3. Its function is as follows. Catalyzes the phosphorylation of ribose 1,5-bisphosphate to 5-phospho-D-ribosyl alpha-1-diphosphate (PRPP). The sequence is that of Ribose 1,5-bisphosphate phosphokinase PhnN from Burkholderia mallei (strain SAVP1).